The following is a 370-amino-acid chain: MILKRISILNYKNLEQVELNFSAKLNCFFGQNGMGKTNLLDAVYFLSFCKSAGNPIDSQNIRHEQDFFVIQGFYEAMDGTPEEIYCGMKRRSKKQFKRNKKEYSRLSDHIGFIPLVMVSPADSELIAGGSDERRRFMDVVISQYDKEYLDALIRYNKALVQRNTLLKSEQPIEEELFLVWEEMMAQAGEVVFRKREAFISEFIPIFQSFYSYISQDKEQVGLTYESHARNASLLEVLKESRVRDKIMGYSLRGIHKDELNMLLGDFPIKREGSQGQNKTYLVALKLAQFDFLKRTGSTVPLLLLDDIFDKLDASRVEQIVKLVAGDNFGQIFITDTNREHLDRILYKVGSDYKMFRVESGAINEMEEKER.

30–37 (GQNGMGKT) serves as a coordination point for ATP.

Belongs to the RecF family.

It localises to the cytoplasm. Functionally, the RecF protein is involved in DNA metabolism; it is required for DNA replication and normal SOS inducibility. RecF binds preferentially to single-stranded, linear DNA. It also seems to bind ATP. The chain is DNA replication and repair protein RecF from Bacteroides fragilis (strain YCH46).